The sequence spans 141 residues: Transcription antitermination protein NusB (141 aa).

This sequence belongs to the NusB family.

In terms of biological role, involved in transcription antitermination. Required for transcription of ribosomal RNA (rRNA) genes. Binds specifically to the boxA antiterminator sequence of the ribosomal RNA (rrn) operons. In Neisseria meningitidis serogroup A / serotype 4A (strain DSM 15465 / Z2491), this protein is Transcription antitermination protein NusB.